Reading from the N-terminus, the 2145-residue chain is Mediator of RNA polymerase II transcription subunit 12-like protein (2145 aa).

The interval 1–30 (MAAFGLLSYEQRPLKRPRLGPPDVYPQDPK) is disordered. Phosphothreonine is present on Thr-462. Basic and acidic residues predominate over residues 1436-1455 (ELEKGQHLGSSSKKERDRQK). 3 disordered regions span residues 1436 to 1460 (ELEKGQHLGSSSKKERDRQKQKSMS), 1721 to 1802 (RSYY…ISSQ), and 2029 to 2145 (DAVL…PSHF). Residues 1768–1777 (TKGRKRKTKS) are compositionally biased toward basic residues. Low complexity predominate over residues 2052–2069 (RQPQVRQQQRLLQMQQPQ). Residues 2070 to 2079 (QPQPQQPPQP) show a composition bias toward pro residues. A compositionally biased stretch (polar residues) spans 2089–2099 (TLGLQAMQPQQ). Residues 2104–2124 (RQGLQQTQQQQQTAALVRQLQ) show a composition bias toward low complexity. Residues 2125 to 2136 (KQLSSNQPQQGV) show a composition bias toward polar residues.

The protein belongs to the Mediator complex subunit 12 family. In terms of assembly, may be a component of the Mediator complex, which is known to be composed of MED1, MED4, MED6, MED7, MED8, MED9, MED10, MED11, MED12, MED13, MED13L, MED14, MED15, MED16, MED17, MED18, MED19, MED20, MED21, MED22, MED23, MED24, MED25, MED26, MED27, MED29, MED30, MED31, CCNC, CDK8 and CDC2L6/CDK11. The MED12, MED13, CCNC and CDK8 subunits form a distinct module termed the CDK8 module. Mediator containing the CDK8 module is less active than Mediator lacking this module in supporting transcriptional activation. Individual preparations of the Mediator complex lacking one or more distinct subunits have been variously termed ARC, CRSP, DRIP, PC2, SMCC and TRAP.

The protein localises to the nucleus. Its function is as follows. May be a component of the Mediator complex, a coactivator involved in the regulated transcription of nearly all RNA polymerase II-dependent genes. Mediator functions as a bridge to convey information from gene-specific regulatory proteins to the basal RNA polymerase II transcription machinery. Mediator is recruited to promoters by direct interactions with regulatory proteins and serves as a scaffold for the assembly of a functional preinitiation complex with RNA polymerase II and the general transcription factors. The polypeptide is Mediator of RNA polymerase II transcription subunit 12-like protein (MED12L) (Homo sapiens (Human)).